A 420-amino-acid chain; its full sequence is Proteasome-activating nucleotidase (420 aa).

A disordered region spans residues 1 to 25; it reads MRSHLVKPGSVYDGIEPGELGETTE. Residues 22 to 79 are a coiled coil; it reads ETTESVQDRVRQLESRNSFLEEQCSQIESEKRYLENQKIKYEREIRKLQSELDRMKTS. Residues 203–208 and histidine 342 each bind ATP; that span reads GTGKTL. The docks into pockets in the proteasome alpha-ring to cause gate opening stretch occupies residues 418–420; the sequence is MFV.

The protein belongs to the AAA ATPase family. In terms of assembly, homohexamer. The hexameric complex has a two-ring architecture resembling a top hat that caps the 20S proteasome core at one or both ends. Upon ATP-binding, the C-terminus of PAN interacts with the alpha-rings of the proteasome core by binding to the intersubunit pockets.

It localises to the cytoplasm. Functionally, ATPase which is responsible for recognizing, binding, unfolding and translocation of substrate proteins into the archaeal 20S proteasome core particle. Is essential for opening the gate of the 20S proteasome via an interaction with its C-terminus, thereby allowing substrate entry and access to the site of proteolysis. Thus, the C-termini of the proteasomal ATPase function like a 'key in a lock' to induce gate opening and therefore regulate proteolysis. Unfolding activity requires energy from ATP hydrolysis, whereas ATP binding alone promotes ATPase-20S proteasome association which triggers gate opening, and supports translocation of unfolded substrates. This is Proteasome-activating nucleotidase from Methanosarcina mazei (strain ATCC BAA-159 / DSM 3647 / Goe1 / Go1 / JCM 11833 / OCM 88) (Methanosarcina frisia).